A 380-amino-acid chain; its full sequence is Protein Wnt-5a (380 aa).

A signal peptide spans 1–35 (MKKSIGILSPGVALGMAGSAMSSKFFLVALAIFFS). The propeptide occupies 36-61 (FAQVVIEANSWWSLGMNNPVQMSEVY). Cys104 and Cys115 are joined by a disulfide. N-linked (GlcNAc...) asparagine glycans are attached at residues Asn114 and Asn120. Cystine bridges form between Cys154/Cys162, Cys164/Cys182, Cys238/Cys252, Cys240/Cys247, Cys309/Cys340, Cys325/Cys335, Cys339/Cys379, Cys355/Cys370, Cys357/Cys367, and Cys362/Cys363. The O-palmitoleoyl serine; by PORCN moiety is linked to residue Ser244. N-linked (GlcNAc...) asparagine glycosylation is found at Asn312 and Asn326.

Belongs to the Wnt family. As to quaternary structure, forms a soluble 1:1 complex with AFM; this prevents oligomerization and is required for prolonged biological activity. The complex with AFM may represent the physiological form in body fluids. Homooligomer; disulfide-linked, leading to inactivation (in vitro). Interacts with PORCN. Interacts with WLS. Interacts with glypican GCP3. Interacts with PKD1 (via extracellular domain). Interacts with TMEM67. In terms of processing, glycosylation is necessary for secretion but not for activity. Palmitoleoylation is required for efficient binding to frizzled receptors. Depalmitoleoylation leads to Wnt signaling pathway inhibition. Post-translationally, proteolytic processing by TIKI1 and TIKI2 promotes oxidation and formation of large disulfide-bond oligomers, leading to inactivation of WNT5A. Expression is increased in differentiated thyroid carcinomas compared to normal thyroid tissue and anaplastic thyroid tumors where expression is low or undetectable. Expression is found in thyrocytes but not in stromal cells (at protein level). Detected in neonate heart and lung.

Its subcellular location is the secreted. It localises to the extracellular space. The protein resides in the extracellular matrix. Ligand for members of the frizzled family of seven transmembrane receptors. Can activate or inhibit canonical Wnt signaling, depending on receptor context. In the presence of FZD4, activates beta-catenin signaling. In the presence of ROR2, inhibits the canonical Wnt pathway by promoting beta-catenin degradation through a GSK3-independent pathway which involves down-regulation of beta-catenin-induced reporter gene expression. Suppression of the canonical pathway allows chondrogenesis to occur and inhibits tumor formation. Stimulates cell migration. Decreases proliferation, migration, invasiveness and clonogenicity of carcinoma cells and may act as a tumor suppressor. Mediates motility of melanoma cells. Required during embryogenesis for extension of the primary anterior-posterior axis and for outgrowth of limbs and the genital tubercle. Inhibits type II collagen expression in chondrocytes. The chain is Protein Wnt-5a (WNT5A) from Homo sapiens (Human).